The following is a 152-amino-acid chain: MAKRMQVILNQKVSKLGENGDVVEVAPGYARNYLIPQGVAVLATKGAIKQAEFRKEKERQRLLAEKQEAETRKTAIEKLSPYSIPKQVGENEAIFGTVTSQDVATVILENAKLEIDRRGITVPDIGQLGVYKVQVKLHPEVSADIEIKVIAQ.

The protein belongs to the bacterial ribosomal protein bL9 family.

Binds to the 23S rRNA. This Microcystis aeruginosa (strain NIES-843 / IAM M-2473) protein is Large ribosomal subunit protein bL9.